The primary structure comprises 313 residues: 3-O-acetylpapaveroxine carboxylesterase CXE2 (313 aa).

The Involved in the stabilization of the negatively charged intermediate by the formation of the oxyanion hole signature appears at 72 to 74 (HGG). Active-site residues include Ser158, Asp262, and His292.

Belongs to the 'GDXG' lipolytic enzyme family.

It carries out the reaction 3-O-acetylpapaveroxine + H2O = narcotine hemiacetal + acetate + H(+). It participates in alkaloid biosynthesis. Carboxylesterase involved in the biosynthesis of the benzylisoquinoline alkaloid noscapine. Converts 3-O-acetylpapaveroxine to narcotine hemiacetal. In Papaver somniferum (Opium poppy), this protein is 3-O-acetylpapaveroxine carboxylesterase CXE2.